Consider the following 66-residue polypeptide: Large ribosomal subunit protein bL35 (66 aa).

This sequence belongs to the bacterial ribosomal protein bL35 family.

This chain is Large ribosomal subunit protein bL35, found in Parvibaculum lavamentivorans (strain DS-1 / DSM 13023 / NCIMB 13966).